A 324-amino-acid chain; its full sequence is Thiamine thiazole synthase (324 aa).

Residues C86, E107 to A108, G115, and V180 each bind substrate. 2,3-didehydroalanine (Cys) is present on C213. Substrate is bound by residues D215, H230, M282, and R292 to G294.

The protein belongs to the THI4 family. Homooctamer. Fe cation serves as cofactor. During the catalytic reaction, a sulfide is transferred from Cys-213 to a reaction intermediate, generating a dehydroalanine residue.

The protein resides in the cytoplasm. It localises to the nucleus. The catalysed reaction is [ADP-thiazole synthase]-L-cysteine + glycine + NAD(+) = [ADP-thiazole synthase]-dehydroalanine + ADP-5-ethyl-4-methylthiazole-2-carboxylate + nicotinamide + 3 H2O + 2 H(+). Functionally, involved in biosynthesis of the thiamine precursor thiazole. Catalyzes the conversion of NAD and glycine to adenosine diphosphate 5-(2-hydroxyethyl)-4-methylthiazole-2-carboxylic acid (ADT), an adenylated thiazole intermediate. The reaction includes an iron-dependent sulfide transfer from a conserved cysteine residue of the protein to a thiazole intermediate. The enzyme can only undergo a single turnover, which suggests it is a suicide enzyme. May have additional roles in adaptation to various stress conditions and in DNA damage tolerance. The protein is Thiamine thiazole synthase (sti35) of Fusarium solani subsp. phaseoli (Nectria haematococca).